Here is a 651-residue protein sequence, read N- to C-terminus: MIKITFPDNSVREYAKGTTAMQIAESISSRLAQEVLAASVNGEVWDLSRPINDDATVKLLKWEDEEGKHAFWHSSAHLMAEALQELYPGIKFGIGPAIENGFYYDVDPGEAVIKEGDFAAIEAKMLELVAKKEEIKRQDITKADAMKMFGDRGEEYKTELISELEDGTITTYTQGSFTDLCRGPHLPNTSYLKAVKILSVAGAYWRGDEKRKQLVRLYGITFPKKKMLDEYLTLLEEAKKRDHRKIGKEMDLFMFSDTVGKGLPMWLPKGTALRLRLQEFLRRIQARYNYQEVMCPPIGNKLLYITSGHYAKYGKDSFQPIHTPEEGEEYFLKPMNCPHHCMIYKNSPRSYKDLPLRLAEFGTVCRYEQSGELHGLTRVRSFTQDDAHIFCRPDQVKQEFLNVMDIISIVFKTMNFENFEAQISLRDKVNREKYIGSDENWEKAEQAIVEACEEKGLKAKIEYGEAAFYGPKLDFMVKDAIGRRWQLGTIQVDYNLPERFQLEYTGADNQKHRPVMIHRAPFGSMERFVAVLIEHTAGKFPLWLTPEQVCIMPISEKFNDYAWQIARELGNQEIRAIVDDRNEKIGRKIRDNELKRIPYMLIVGEKEAENSEVSVRKQGEGDKGSMKIATFAALLNGEVEEMMNRWQKSND.

The TGS domain maps to 1 to 61 (MIKITFPDNS…NDDATVKLLK (61 aa)). A catalytic region spans residues 242-541 (DHRKIGKEMD…LIEHTAGKFP (300 aa)). The Zn(2+) site is built by C337, H388, and H518.

It belongs to the class-II aminoacyl-tRNA synthetase family. In terms of assembly, homodimer. It depends on Zn(2+) as a cofactor.

The protein localises to the cytoplasm. The catalysed reaction is tRNA(Thr) + L-threonine + ATP = L-threonyl-tRNA(Thr) + AMP + diphosphate + H(+). In terms of biological role, catalyzes the attachment of threonine to tRNA(Thr) in a two-step reaction: L-threonine is first activated by ATP to form Thr-AMP and then transferred to the acceptor end of tRNA(Thr). Also edits incorrectly charged L-seryl-tRNA(Thr). The polypeptide is Threonine--tRNA ligase (Parabacteroides distasonis (strain ATCC 8503 / DSM 20701 / CIP 104284 / JCM 5825 / NCTC 11152)).